We begin with the raw amino-acid sequence, 650 residues long: MGCGTSSKKGNKSKKVIKAALVIQNWYRRYRARLRVRQHYALAIFQSIEYSDEQGQMQLSSFFSFMLENYTKTNNEDSALVTRIFDNTRRESQIKDRDDFLGLIEVPDSYDGPRLQFPLTFTDIHILLQAFKQQQILHAHYVLEVLFEARKVLKQMPNFSHVKTFPAKEITICGDLHGKLDDLMLIFYKNGLPSENNPYVFNGDFVDRGNNSMEILMILLVCFLVYPSDLHLNRGNHEDFMMNLRYGFTKEILQKYKLHGRKILQVLEEVYTWLPIGTIIDNEILVIHGGISESTDLNTLHQLQRNKMKSVLMPPVLGNQETGEKRNKSASNYVEPRKVEPDKTPSEDLTKQEWEQIVDILWSDPRGKKGCYPNTSRGGGCYFGPDVTSKVLSKNQLKMLIRSHECKPDGYEVSHDGKVITVFSASNYYEEGSNRGAYIRLSYGTMPQFFQYQVTSTSCLNPLHQRMNAMESSAFKILKEKMISRKTDLINAFELRDHSRSGRISLAEWAFSMENILGLNLPWRSLSSHLVTIDSSGSVDYMSSFDDIRIEKPTKDMKSNLTETMYRYRSDLKIIFNIIDSDQSGLISMDEFRTMWKLFNAHYKAHIDDSQIDELASIVDFNKDGNIDFNEFLKAFYVVHKYDKPGTSLA.

An IQ domain is found at V16–F45. The tract at residues I124–S456 is catalytic. Residues D175, H177, D204, and N236 each coordinate Mn(2+). H237 functions as the Proton donor in the catalytic mechanism. H288 serves as a coordination point for Mn(2+). The interval P315–D348 is disordered. Over residues E335 to D348 the composition is skewed to basic and acidic residues. H404 is a Mn(2+) binding site. 3 EF-hand domains span residues S484–L519, R567–H602, and I607–Y642. Residues D497, S499, S501, R503, E508, D580, D582, S584, E591, D620, N622, D624, N626, and E631 each contribute to the Ca(2+) site.

It belongs to the PPP phosphatase family. Requires Mn(2+) as cofactor. The cofactor is Mg(2+). In the embryo it is almost exclusively expressed in the peripheral nervous system, within sensory neurons of cranial and dorsal root ganglia. Otherwise found in fetal inner ear and a small group of neurons in the midbrain/pons junction.

It catalyses the reaction O-phospho-L-seryl-[protein] + H2O = L-seryl-[protein] + phosphate. The enzyme catalyses O-phospho-L-threonyl-[protein] + H2O = L-threonyl-[protein] + phosphate. With respect to regulation, activated by calcium. May have a role in the recovery or adaptation response of photoreceptors. May have a role in diverse sensory neurons and in development. This is Serine/threonine-protein phosphatase with EF-hands 1 (Ppef1) from Mus musculus (Mouse).